An 87-amino-acid chain; its full sequence is MSEQTGKVDDSQSPPKVQKKLRKGDLVKVDREKYSNSLESKASDTNLPEYIFQGPGEVLLIKGDYCQVRWRRPVPDVWMNSDHIVSY.

A compositionally biased stretch (basic and acidic residues) spans Met-1–Asp-10. A disordered region spans residues Met-1–Leu-26.

It belongs to the complex I NdhO subunit family. In terms of assembly, NDH-1 can be composed of about 15 different subunits; different subcomplexes with different compositions have been identified which probably have different functions.

Its subcellular location is the cellular thylakoid membrane. The catalysed reaction is a plastoquinone + NADH + (n+1) H(+)(in) = a plastoquinol + NAD(+) + n H(+)(out). The enzyme catalyses a plastoquinone + NADPH + (n+1) H(+)(in) = a plastoquinol + NADP(+) + n H(+)(out). NDH-1 shuttles electrons from an unknown electron donor, via FMN and iron-sulfur (Fe-S) centers, to quinones in the respiratory and/or the photosynthetic chain. The immediate electron acceptor for the enzyme in this species is believed to be plastoquinone. Couples the redox reaction to proton translocation, and thus conserves the redox energy in a proton gradient. Cyanobacterial NDH-1 also plays a role in inorganic carbon-concentration. In Prochlorococcus marinus (strain NATL1A), this protein is NAD(P)H-quinone oxidoreductase subunit O.